A 261-amino-acid polypeptide reads, in one-letter code: 5-oxoprolinase subunit A (261 aa).

This sequence belongs to the LamB/PxpA family. In terms of assembly, forms a complex composed of PxpA, PxpB and PxpC.

It carries out the reaction 5-oxo-L-proline + ATP + 2 H2O = L-glutamate + ADP + phosphate + H(+). Its function is as follows. Catalyzes the cleavage of 5-oxoproline to form L-glutamate coupled to the hydrolysis of ATP to ADP and inorganic phosphate. The sequence is that of 5-oxoprolinase subunit A from Coprothermobacter proteolyticus (strain ATCC 35245 / DSM 5265 / OCM 4 / BT).